Reading from the N-terminus, the 259-residue chain is Glucosamine-6-phosphate deaminase (259 aa).

Catalysis depends on aspartate 66, which acts as the Proton acceptor; for enolization step. The For ring-opening step role is filled by aspartate 135. Histidine 137 functions as the Proton acceptor; for ring-opening step in the catalytic mechanism. The active-site For ring-opening step is the glutamate 142.

The protein belongs to the glucosamine/galactosamine-6-phosphate isomerase family. NagB subfamily.

The catalysed reaction is alpha-D-glucosamine 6-phosphate + H2O = beta-D-fructose 6-phosphate + NH4(+). It participates in amino-sugar metabolism; N-acetylneuraminate degradation; D-fructose 6-phosphate from N-acetylneuraminate: step 5/5. Catalyzes the reversible isomerization-deamination of glucosamine 6-phosphate (GlcN6P) to form fructose 6-phosphate (Fru6P) and ammonium ion. The protein is Glucosamine-6-phosphate deaminase of Rhodococcus jostii (strain RHA1).